A 365-amino-acid chain; its full sequence is Chorismate synthase (365 aa).

NADP(+) is bound by residues Arg-48 and Arg-54. FMN-binding positions include 131–133 (RSS), 243–244 (NA), Gly-288, 303–307 (KPTSS), and Arg-329.

This sequence belongs to the chorismate synthase family. In terms of assembly, homotetramer. Requires FMNH2 as cofactor.

It carries out the reaction 5-O-(1-carboxyvinyl)-3-phosphoshikimate = chorismate + phosphate. The protein operates within metabolic intermediate biosynthesis; chorismate biosynthesis; chorismate from D-erythrose 4-phosphate and phosphoenolpyruvate: step 7/7. Its function is as follows. Catalyzes the anti-1,4-elimination of the C-3 phosphate and the C-6 proR hydrogen from 5-enolpyruvylshikimate-3-phosphate (EPSP) to yield chorismate, which is the branch point compound that serves as the starting substrate for the three terminal pathways of aromatic amino acid biosynthesis. This reaction introduces a second double bond into the aromatic ring system. The protein is Chorismate synthase of Rhizobium etli (strain CIAT 652).